We begin with the raw amino-acid sequence, 212 residues long: Thiamine-phosphate synthase (212 aa).

Residues 43-47 (QYRNK) and asparagine 75 contribute to the 4-amino-2-methyl-5-(diphosphooxymethyl)pyrimidine site. Residues aspartate 76 and aspartate 95 each contribute to the Mg(2+) site. Position 114 (serine 114) interacts with 4-amino-2-methyl-5-(diphosphooxymethyl)pyrimidine. 141–143 (SMT) provides a ligand contact to 2-[(2R,5Z)-2-carboxy-4-methylthiazol-5(2H)-ylidene]ethyl phosphate. Lysine 144 contacts 4-amino-2-methyl-5-(diphosphooxymethyl)pyrimidine. Glycine 171 contributes to the 2-[(2R,5Z)-2-carboxy-4-methylthiazol-5(2H)-ylidene]ethyl phosphate binding site.

Belongs to the thiamine-phosphate synthase family. Mg(2+) serves as cofactor.

The enzyme catalyses 2-[(2R,5Z)-2-carboxy-4-methylthiazol-5(2H)-ylidene]ethyl phosphate + 4-amino-2-methyl-5-(diphosphooxymethyl)pyrimidine + 2 H(+) = thiamine phosphate + CO2 + diphosphate. It carries out the reaction 2-(2-carboxy-4-methylthiazol-5-yl)ethyl phosphate + 4-amino-2-methyl-5-(diphosphooxymethyl)pyrimidine + 2 H(+) = thiamine phosphate + CO2 + diphosphate. The catalysed reaction is 4-methyl-5-(2-phosphooxyethyl)-thiazole + 4-amino-2-methyl-5-(diphosphooxymethyl)pyrimidine + H(+) = thiamine phosphate + diphosphate. It functions in the pathway cofactor biosynthesis; thiamine diphosphate biosynthesis; thiamine phosphate from 4-amino-2-methyl-5-diphosphomethylpyrimidine and 4-methyl-5-(2-phosphoethyl)-thiazole: step 1/1. Functionally, condenses 4-methyl-5-(beta-hydroxyethyl)thiazole monophosphate (THZ-P) and 2-methyl-4-amino-5-hydroxymethyl pyrimidine pyrophosphate (HMP-PP) to form thiamine monophosphate (TMP). The chain is Thiamine-phosphate synthase from Nitrosomonas eutropha (strain DSM 101675 / C91 / Nm57).